We begin with the raw amino-acid sequence, 495 residues long: Cysteine--tRNA ligase (495 aa).

Cys29 serves as a coordination point for Zn(2+). Positions 31-41 (VTVYDDSHVGH) match the 'HIGH' region motif. Positions 209, 234, and 238 each coordinate Zn(2+). The 'KMSKS' region motif lies at 266 to 270 (KMSKS). Position 269 (Lys269) interacts with ATP.

This sequence belongs to the class-I aminoacyl-tRNA synthetase family. Monomer. It depends on Zn(2+) as a cofactor.

The protein resides in the cytoplasm. The enzyme catalyses tRNA(Cys) + L-cysteine + ATP = L-cysteinyl-tRNA(Cys) + AMP + diphosphate. This chain is Cysteine--tRNA ligase (cysS), found in Aquifex aeolicus (strain VF5).